The following is a 712-amino-acid chain: Probable metal-nicotianamine transporter YSL11 (712 aa).

The tract at residues 25 to 48 (RRNTTAAARGNAGEEEEEAEAVAP) is disordered. 14 consecutive transmembrane segments (helical) span residues 70-90 (AFVV…KLSL), 93-113 (GVIP…VRLW), 138-158 (CVVS…LFGM), 180-200 (LGWI…ALVP), 242-262 (LGKY…YTAG), 300-320 (IVNV…WPLI), 345-365 (VFIT…KVFG), 418-438 (VAIG…PLII), 446-466 (ILIA…GSGL), 478-498 (LAIF…LVGL), 532-552 (FVSQ…VFWL), 593-613 (LTLC…KDLV), 631-651 (FYLG…LYFW), and 666-686 (VASG…VLSL).

Belongs to the YSL (TC 2.A.67.2) family.

It is found in the membrane. Its function is as follows. May be involved in the transport of nicotianamine-chelated metals. The chain is Probable metal-nicotianamine transporter YSL11 (YSL11) from Oryza sativa subsp. japonica (Rice).